Consider the following 290-residue polypeptide: Shikimate kinase (290 aa).

Residue 81-91 (PIASGLKSSSA) participates in ATP binding.

It belongs to the GHMP kinase family. Archaeal shikimate kinase subfamily.

It localises to the cytoplasm. It catalyses the reaction shikimate + ATP = 3-phosphoshikimate + ADP + H(+). It participates in metabolic intermediate biosynthesis; chorismate biosynthesis; chorismate from D-erythrose 4-phosphate and phosphoenolpyruvate: step 5/7. In Methanocella arvoryzae (strain DSM 22066 / NBRC 105507 / MRE50), this protein is Shikimate kinase.